The following is a 353-amino-acid chain: UPF0283 membrane protein YcjF (353 aa).

A run of 3 helical transmembrane segments spans residues Met70 to Thr90, Val100 to Val120, and Glu213 to Trp233.

This sequence belongs to the UPF0283 family.

The protein localises to the cell inner membrane. The polypeptide is UPF0283 membrane protein YcjF (Escherichia coli O45:K1 (strain S88 / ExPEC)).